The chain runs to 418 residues: FK506-binding protein 3 (418 aa).

3 disordered regions span residues 49–133 (PSTL…DDEF), 172–273 (SLTG…ETKK), and 289–309 (LEEG…KPKT). Positions 61–89 (YDDEDDAGGLLGDYDEDELDISEEEEEEE) are enriched in acidic residues. Residues 93-103 (KSKKGKGKGKS) are compositionally biased toward basic residues. Composition is skewed to acidic residues over residues 108–133 (EEEE…DDEF) and 186–224 (GYDD…DASD). Basic and acidic residues predominate over residues 225-239 (VEAKIQELVEKEQSK). Positions 251–264 (PEEEEEEEEEEEEE) are enriched in acidic residues. The PPIase FKBP-type domain occupies 332-418 (GSKVGMRYIG…TFDVKLVSLK (87 aa)).

The protein belongs to the FKBP-type PPIase family. FKBP3/4 subfamily.

The protein resides in the nucleus. It is found in the nucleolus. The catalysed reaction is [protein]-peptidylproline (omega=180) = [protein]-peptidylproline (omega=0). Inhibited by both FK506 and rapamycin. Its function is as follows. PPIases accelerate the folding of proteins. It catalyzes the cis-trans isomerization of proline imidic peptide bonds in oligopeptides. This is FK506-binding protein 3 (FPR3) from Kluyveromyces lactis (strain ATCC 8585 / CBS 2359 / DSM 70799 / NBRC 1267 / NRRL Y-1140 / WM37) (Yeast).